The following is a 552-amino-acid chain: Nucleoside-diphosphatase mig-23 (552 aa).

At 1-6 the chain is on the cytoplasmic side; that stretch reads MRVSLR. The chain crosses the membrane as a helical span at residues 7–27; the sequence is FTILAVSAMIFFPVIVFIYVV. Over 28 to 489 the chain is Lumenal; that stretch reads EAHTSPKVIA…IVKETHSSSE (462 aa). The active-site Proton acceptor is E174. N-linked (GlcNAc...) asparagine glycosylation is found at N190 and N284. Residues 490 to 510 form a helical membrane-spanning segment; the sequence is SLWAPLFFLSAVFCLFVLVCA. The Cytoplasmic segment spans residues 511-552; that stretch reads KEQSVLCFDDKRRSSFGMSRSQYSYKMLKENRTSSSFLENFA.

The protein belongs to the GDA1/CD39 NTPase family. Expressed in body wall muscles.

The protein localises to the golgi apparatus membrane. It catalyses the reaction a ribonucleoside 5'-diphosphate + H2O = a ribonucleoside 5'-phosphate + phosphate + H(+). Functionally, seems to be able to hydrolyze ADP, UDP and GDP. Supports mig-17 glycosylation and surface expression, which is required for proper migration of distal tip cells during gonad morphogenesis. The chain is Nucleoside-diphosphatase mig-23 (mig-23) from Caenorhabditis elegans.